Here is a 177-residue protein sequence, read N- to C-terminus: Large ribosomal subunit protein uL6 (177 aa).

It belongs to the universal ribosomal protein uL6 family. Part of the 50S ribosomal subunit.

Functionally, this protein binds to the 23S rRNA, and is important in its secondary structure. It is located near the subunit interface in the base of the L7/L12 stalk, and near the tRNA binding site of the peptidyltransferase center. The polypeptide is Large ribosomal subunit protein uL6 (Bordetella bronchiseptica (strain ATCC BAA-588 / NCTC 13252 / RB50) (Alcaligenes bronchisepticus)).